The following is a 92-amino-acid chain: Small ribosomal subunit protein uS19 (92 aa).

This sequence belongs to the universal ribosomal protein uS19 family.

Its function is as follows. Protein S19 forms a complex with S13 that binds strongly to the 16S ribosomal RNA. This is Small ribosomal subunit protein uS19 from Phenylobacterium zucineum (strain HLK1).